The primary structure comprises 216 residues: Probable GTP-binding protein EngB (216 aa).

In terms of domain architecture, EngB-type G spans 37 to 214 (DGLEVAFAGR…RAAMIRLLDE (178 aa)). GTP is bound by residues 45-52 (GRSNVGKS), 72-76 (GRTQE), 92-95 (DMPG), 159-162 (TKAD), and 193-195 (TSS). Residues S52 and T74 each contribute to the Mg(2+) site.

This sequence belongs to the TRAFAC class TrmE-Era-EngA-EngB-Septin-like GTPase superfamily. EngB GTPase family. The cofactor is Mg(2+).

In terms of biological role, necessary for normal cell division and for the maintenance of normal septation. The polypeptide is Probable GTP-binding protein EngB (Rhodopseudomonas palustris (strain HaA2)).